A 137-amino-acid polypeptide reads, in one-letter code: 1,4-dihydroxy-2-naphthoyl-CoA hydrolase (137 aa).

D13 is an active-site residue.

The protein belongs to the 4-hydroxybenzoyl-CoA thioesterase family. DHNA-CoA hydrolase subfamily.

It catalyses the reaction 1,4-dihydroxy-2-naphthoyl-CoA + H2O = 1,4-dihydroxy-2-naphthoate + CoA + H(+). It functions in the pathway cofactor biosynthesis; phylloquinone biosynthesis. It participates in quinol/quinone metabolism; 1,4-dihydroxy-2-naphthoate biosynthesis; 1,4-dihydroxy-2-naphthoate from chorismate: step 7/7. Catalyzes the hydrolysis of 1,4-dihydroxy-2-naphthoyl-CoA (DHNA-CoA) to 1,4-dihydroxy-2-naphthoate (DHNA), a reaction involved in phylloquinone (vitamin K1) biosynthesis. In Crocosphaera subtropica (strain ATCC 51142 / BH68) (Cyanothece sp. (strain ATCC 51142)), this protein is 1,4-dihydroxy-2-naphthoyl-CoA hydrolase.